The following is a 72-amino-acid chain: Small ribosomal subunit protein bS18 (72 aa).

It belongs to the bacterial ribosomal protein bS18 family. Part of the 30S ribosomal subunit. Forms a tight heterodimer with protein bS6.

Its function is as follows. Binds as a heterodimer with protein bS6 to the central domain of the 16S rRNA, where it helps stabilize the platform of the 30S subunit. The sequence is that of Small ribosomal subunit protein bS18 from Aquifex aeolicus (strain VF5).